A 124-amino-acid polypeptide reads, in one-letter code: uncharacterized protein (124 aa).

The protein resides in the cytoplasm. It localises to the nucleus. This is an uncharacterized protein from Schizosaccharomyces pombe (strain 972 / ATCC 24843) (Fission yeast).